We begin with the raw amino-acid sequence, 126 residues long: Histone H2B 7 (126 aa).

Residues 1–12 (MPEPAKSAPAPK) show a composition bias toward low complexity. The segment at 1-35 (MPEPAKSAPAPKKGSKKAVTKTQKKGDKKRKRARK) is disordered. N6-acetyllysine occurs at positions 6 and 13. Basic residues predominate over residues 13-34 (KGSKKAVTKTQKKGDKKRKRAR). S15 is subject to Phosphoserine. Residues K16 and K21 each carry the N6-acetyllysine modification. O-linked (GlcNAc) serine glycosylation is present at S113. Residue K121 forms a Glycyl lysine isopeptide (Lys-Gly) (interchain with G-Cter in ubiquitin) linkage.

The protein belongs to the histone H2B family. As to quaternary structure, the nucleosome is a histone octamer containing two molecules each of H2A, H2B, H3 and H4 assembled in one H3-H4 heterotetramer and two H2A-H2B heterodimers. The octamer wraps approximately 147 bp of DNA. Monoubiquitination of Lys-121 by the BRE1 gives a specific tag for epigenetic transcriptional activation and is also prerequisite for histone H3 'Lys-4' and 'Lys-79' methylation. Post-translationally, phosphorylated on Ser-15 during apoptosis; which facilitates apoptotic chromatin condensation. In terms of processing, glcNAcylation at Ser-113 promotes monoubiquitination of Lys-121. It fluctuates in response to extracellular glucose, and associates with transcribed genes.

The protein resides in the nucleus. It localises to the chromosome. Functionally, core component of nucleosome. Nucleosomes wrap and compact DNA into chromatin, limiting DNA accessibility to the cellular machineries which require DNA as a template. Histones thereby play a central role in transcription regulation, DNA repair, DNA replication and chromosomal stability. DNA accessibility is regulated via a complex set of post-translational modifications of histones, also called histone code, and nucleosome remodeling. The sequence is that of Histone H2B 7 (H2B-VII) from Gallus gallus (Chicken).